Here is a 233-residue protein sequence, read N- to C-terminus: Small ribosomal subunit protein uS3 (233 aa).

In terms of domain architecture, KH type-2 spans 39–107 (VRQFLMKKLV…PAQINISEVR (69 aa)).

It belongs to the universal ribosomal protein uS3 family. As to quaternary structure, part of the 30S ribosomal subunit. Forms a tight complex with proteins S10 and S14.

Binds the lower part of the 30S subunit head. Binds mRNA in the 70S ribosome, positioning it for translation. The sequence is that of Small ribosomal subunit protein uS3 from Buchnera aphidicola subsp. Schizaphis graminum (strain Sg).